Consider the following 1043-residue polypeptide: Unconventional myosin-Ia (1043 aa).

The Myosin motor domain occupies 8 to 694; sequence VGVEDLILLE…TLFYLEEQRR (687 aa). Residue 101-108 coordinates ATP; it reads GESGAGKT. Residues 571 to 593 are actin-binding; sequence VAVLMKNLYSKNPNYIRCIKPND. 3 consecutive IQ domains span residues 697-719, 720-742, and 743-772; these read LQQLATLIQKVYRGWRCRTHYQQ, MRKSQILISAWFRGNKQKKHYGK, and IRSSVLLIQAFVRGWRARKNYRKYFRSGAA. The TH1 domain maps to 858 to 1042; it reads KASYPQSVPI…KGSNAMEVTV (185 aa).

Belongs to the TRAFAC class myosin-kinesin ATPase superfamily. Myosin family. Phosphorylated by ALPK1.

Its function is as follows. Involved in directing the movement of organelles along actin filaments. The protein is Unconventional myosin-Ia (Myo1a) of Mus musculus (Mouse).